A 187-amino-acid chain; its full sequence is Thermosensitive gluconokinase (187 aa).

10–17 (GVSGSGKT) serves as a coordination point for ATP.

It belongs to the gluconokinase GntK/GntV family.

It catalyses the reaction D-gluconate + ATP = 6-phospho-D-gluconate + ADP + H(+). It functions in the pathway carbohydrate acid metabolism; L-idonate degradation. This is Thermosensitive gluconokinase (idnK) from Escherichia coli (strain K12).